Here is a 443-residue protein sequence, read N- to C-terminus: Thymidine phosphorylase (443 aa).

The protein belongs to the thymidine/pyrimidine-nucleoside phosphorylase family. As to quaternary structure, homodimer.

The catalysed reaction is thymidine + phosphate = 2-deoxy-alpha-D-ribose 1-phosphate + thymine. It participates in pyrimidine metabolism; dTMP biosynthesis via salvage pathway; dTMP from thymine: step 1/2. Functionally, the enzymes which catalyze the reversible phosphorolysis of pyrimidine nucleosides are involved in the degradation of these compounds and in their utilization as carbon and energy sources, or in the rescue of pyrimidine bases for nucleotide synthesis. In Shewanella halifaxensis (strain HAW-EB4), this protein is Thymidine phosphorylase.